Consider the following 228-residue polypeptide: Probable calcium-binding protein CML48 (228 aa).

2 EF-hand domains span residues 52–87 and 121–156; these read ETHP…SGYD and NCLA…LGCV. Residues Asp-65, Asn-67, Ser-69, and Glu-76 each contribute to the Ca(2+) site.

Functionally, potential calcium sensor. The sequence is that of Probable calcium-binding protein CML48 (CML48) from Arabidopsis thaliana (Mouse-ear cress).